A 480-amino-acid chain; its full sequence is Bifunctional protein GlmU (480 aa).

A pyrophosphorylase region spans residues 1–247 (MATPIDVVIM…AAQVAGVNSP (247 aa)). Residues Lys24, Gln86, 91–92 (GT), 113–115 (SGD), Gly150, Glu172, and Asn245 contribute to the UDP-N-acetyl-alpha-D-glucosamine site. A Mg(2+)-binding site is contributed by Asp115. Asn245 contributes to the Mg(2+) binding site. The segment at 248–268 (VQLAELERVYQLRQATALMEQ) is linker. An N-acetyltransferase region spans residues 269–480 (GVRLADPARF…WKRPVKVSKG (212 aa)). UDP-N-acetyl-alpha-D-glucosamine contacts are provided by Arg355 and Lys373. His385 functions as the Proton acceptor in the catalytic mechanism. UDP-N-acetyl-alpha-D-glucosamine-binding residues include Tyr388 and Asn399. Residues Ala402, 408 to 409 (NY), Ser427, Gly445, and Arg462 contribute to the acetyl-CoA site.

In the N-terminal section; belongs to the N-acetylglucosamine-1-phosphate uridyltransferase family. It in the C-terminal section; belongs to the transferase hexapeptide repeat family. In terms of assembly, homotrimer. Mg(2+) serves as cofactor.

The protein localises to the cytoplasm. It carries out the reaction alpha-D-glucosamine 1-phosphate + acetyl-CoA = N-acetyl-alpha-D-glucosamine 1-phosphate + CoA + H(+). The enzyme catalyses N-acetyl-alpha-D-glucosamine 1-phosphate + UTP + H(+) = UDP-N-acetyl-alpha-D-glucosamine + diphosphate. It functions in the pathway nucleotide-sugar biosynthesis; UDP-N-acetyl-alpha-D-glucosamine biosynthesis; N-acetyl-alpha-D-glucosamine 1-phosphate from alpha-D-glucosamine 6-phosphate (route II): step 2/2. The protein operates within nucleotide-sugar biosynthesis; UDP-N-acetyl-alpha-D-glucosamine biosynthesis; UDP-N-acetyl-alpha-D-glucosamine from N-acetyl-alpha-D-glucosamine 1-phosphate: step 1/1. It participates in bacterial outer membrane biogenesis; LPS lipid A biosynthesis. In terms of biological role, catalyzes the last two sequential reactions in the de novo biosynthetic pathway for UDP-N-acetylglucosamine (UDP-GlcNAc). The C-terminal domain catalyzes the transfer of acetyl group from acetyl coenzyme A to glucosamine-1-phosphate (GlcN-1-P) to produce N-acetylglucosamine-1-phosphate (GlcNAc-1-P), which is converted into UDP-GlcNAc by the transfer of uridine 5-monophosphate (from uridine 5-triphosphate), a reaction catalyzed by the N-terminal domain. This is Bifunctional protein GlmU from Polaromonas sp. (strain JS666 / ATCC BAA-500).